Here is a 155-residue protein sequence, read N- to C-terminus: Small ribosomal subunit protein uS7 (155 aa).

This sequence belongs to the universal ribosomal protein uS7 family. In terms of assembly, part of the 30S ribosomal subunit. Contacts proteins S9 and S11.

One of the primary rRNA binding proteins, it binds directly to 16S rRNA where it nucleates assembly of the head domain of the 30S subunit. Is located at the subunit interface close to the decoding center, probably blocks exit of the E-site tRNA. The chain is Small ribosomal subunit protein uS7 from Xylella fastidiosa (strain M23).